A 397-amino-acid chain; its full sequence is Acetate kinase (397 aa).

Mg(2+) is bound at residue Asn8. Position 15 (Lys15) interacts with ATP. Arg89 contributes to the substrate binding site. Asp146 serves as the catalytic Proton donor/acceptor. Residues 206–210, 281–283, and 329–333 contribute to the ATP site; these read HLGNG, DLR, and GIGEN. Glu382 lines the Mg(2+) pocket.

This sequence belongs to the acetokinase family. As to quaternary structure, homodimer. Mg(2+) serves as cofactor. The cofactor is Mn(2+).

It localises to the cytoplasm. The catalysed reaction is acetate + ATP = acetyl phosphate + ADP. It functions in the pathway metabolic intermediate biosynthesis; acetyl-CoA biosynthesis; acetyl-CoA from acetate: step 1/2. Catalyzes the formation of acetyl phosphate from acetate and ATP. Can also catalyze the reverse reaction. In Bacillus cytotoxicus (strain DSM 22905 / CIP 110041 / 391-98 / NVH 391-98), this protein is Acetate kinase.